Consider the following 732-residue polypeptide: 1,4-alpha-glucan branching enzyme GlgB 1 (732 aa).

Catalysis depends on Asp-411, which acts as the Nucleophile. The Proton donor role is filled by Glu-464.

Belongs to the glycosyl hydrolase 13 family. GlgB subfamily. Monomer.

It catalyses the reaction Transfers a segment of a (1-&gt;4)-alpha-D-glucan chain to a primary hydroxy group in a similar glucan chain.. It participates in glycan biosynthesis; glycogen biosynthesis. Its function is as follows. Catalyzes the formation of the alpha-1,6-glucosidic linkages in glycogen by scission of a 1,4-alpha-linked oligosaccharide from growing alpha-1,4-glucan chains and the subsequent attachment of the oligosaccharide to the alpha-1,6 position. The sequence is that of 1,4-alpha-glucan branching enzyme GlgB 1 from Xanthomonas euvesicatoria pv. vesicatoria (strain 85-10) (Xanthomonas campestris pv. vesicatoria).